The sequence spans 768 residues: Multidomain esterase (768 aa).

A signal peptide spans 1–40 (MKKHFVVGETIKRFLRIGTSLALSISTLSLLPSAPRLSSA). An acetylxylan esterase region spans residues 41–264 (AGTIKIMPLG…YWLEQIEGYL (224 aa)). The Nucleophile; for acetylxylan esterase activity role is filled by serine 68. Catalysis depends on for acetylxylan esterase activity residues aspartate 240 and histidine 243. Residues 267–283 (SDGPQQTQPTQPSQGDS) are compositionally biased toward low complexity. A disordered region spans residues 267–289 (SDGPQQTQPTQPSQGDSGPELIY). The Dockerin domain maps to 285 to 352 (PELIYGDLDG…IIGKIKEFTV (68 aa)). The segment at 353–768 (AEKTVTEKPV…ADTFASKWLY (416 aa)) is glucuronoyl esterase. The GXSYXG catalytic site motif motif lies at 563 to 568 (GVSRYG). Catalysis depends on serine 565, which acts as the Nucleophile; for glucuronoyl esterase activity. Substrate is bound by residues lysine 569, glutamate 633, and tryptophan 679.

In the N-terminal section; belongs to the carbohydrate esterase 3 (CE3) family. This sequence in the C-terminal section; belongs to the carbohydrate esterase 15 (CE15) family.

It is found in the secreted. The enzyme catalyses Deacetylation of xylans and xylo-oligosaccharides.. The catalysed reaction is a 4-O-methyl-alpha-D-glucuronosyl ester derivative + H2O = 4-O-methyl-alpha-D-glucuronate derivative + an alcohol + H(+). The protein operates within glycan degradation; xylan degradation. Its function is as follows. Esterase involved in the degradation of plant cell wall polysaccharides. Catalyzes the deacetylation of chemically acetylated xylan and native, steam-extracted xylan. Seems to act in synergy with the xylanase XynD which produces xylo-oligosaccharides. Also catalyzes the deesterification of methyl esters of 4-O-methyl-D-glucuronic acid (MeGlcA) side residues in synthetic glucuronoxylan methyl ester, suggesting that it may be able to cleave ester linkages between MeGlcA carboxyl and more complex alcohols, including linkages between hemicellulose and lignin alcohols in plant cell walls. The chain is Multidomain esterase from Ruminococcus flavefaciens.